We begin with the raw amino-acid sequence, 89 residues long: Small ribosomal subunit protein uS15 (89 aa).

Belongs to the universal ribosomal protein uS15 family. Part of the 30S ribosomal subunit. Forms a bridge to the 50S subunit in the 70S ribosome, contacting the 23S rRNA.

In terms of biological role, one of the primary rRNA binding proteins, it binds directly to 16S rRNA where it helps nucleate assembly of the platform of the 30S subunit by binding and bridging several RNA helices of the 16S rRNA. Functionally, forms an intersubunit bridge (bridge B4) with the 23S rRNA of the 50S subunit in the ribosome. In Trichormus variabilis (strain ATCC 29413 / PCC 7937) (Anabaena variabilis), this protein is Small ribosomal subunit protein uS15.